A 616-amino-acid chain; its full sequence is Glutamine--fructose-6-phosphate aminotransferase [isomerizing] (616 aa).

The active-site Nucleophile; for GATase activity is the Cys2. A Glutamine amidotransferase type-2 domain is found at 2–221 (CGIVGYVGTD…QDQIVTITPE (220 aa)). SIS domains lie at 288–428 (LGDE…VRGT) and 461–606 (LAHW…VDQP). The active-site For Fru-6P isomerization activity is the Lys611.

Homodimer.

It is found in the cytoplasm. The enzyme catalyses D-fructose 6-phosphate + L-glutamine = D-glucosamine 6-phosphate + L-glutamate. Functionally, catalyzes the first step in hexosamine metabolism, converting fructose-6P into glucosamine-6P using glutamine as a nitrogen source. The sequence is that of Glutamine--fructose-6-phosphate aminotransferase [isomerizing] from Leifsonia xyli subsp. xyli (strain CTCB07).